We begin with the raw amino-acid sequence, 201 residues long: FMN-dependent NADH:quinone oxidoreductase (201 aa).

92–95 contributes to the FMN binding site; it reads MWNL.

It belongs to the azoreductase type 1 family. Homodimer. It depends on FMN as a cofactor.

It carries out the reaction 2 a quinone + NADH + H(+) = 2 a 1,4-benzosemiquinone + NAD(+). It catalyses the reaction N,N-dimethyl-1,4-phenylenediamine + anthranilate + 2 NAD(+) = 2-(4-dimethylaminophenyl)diazenylbenzoate + 2 NADH + 2 H(+). In terms of biological role, quinone reductase that provides resistance to thiol-specific stress caused by electrophilic quinones. Also exhibits azoreductase activity. Catalyzes the reductive cleavage of the azo bond in aromatic azo compounds to the corresponding amines. The chain is FMN-dependent NADH:quinone oxidoreductase from Caldicellulosiruptor bescii (strain ATCC BAA-1888 / DSM 6725 / KCTC 15123 / Z-1320) (Anaerocellum thermophilum).